The chain runs to 298 residues: N-acetylmuramic acid 6-phosphate etherase (298 aa).

Positions I55 to K218 constitute an SIS domain. The active-site Proton donor is E83. E114 is a catalytic residue.

This sequence belongs to the GCKR-like family. MurNAc-6-P etherase subfamily. As to quaternary structure, homodimer.

The enzyme catalyses N-acetyl-D-muramate 6-phosphate + H2O = N-acetyl-D-glucosamine 6-phosphate + (R)-lactate. It functions in the pathway amino-sugar metabolism; 1,6-anhydro-N-acetylmuramate degradation. It participates in amino-sugar metabolism; N-acetylmuramate degradation. Its pathway is cell wall biogenesis; peptidoglycan recycling. Specifically catalyzes the cleavage of the D-lactyl ether substituent of MurNAc 6-phosphate, producing GlcNAc 6-phosphate and D-lactate. Together with AnmK, is also required for the utilization of anhydro-N-acetylmuramic acid (anhMurNAc) either imported from the medium or derived from its own cell wall murein, and thus plays a role in cell wall recycling. This chain is N-acetylmuramic acid 6-phosphate etherase, found in Escherichia coli O157:H7 (strain EC4115 / EHEC).